Here is a 366-residue protein sequence, read N- to C-terminus: Aminomethyltransferase (366 aa).

The protein belongs to the GcvT family. As to quaternary structure, the glycine cleavage system is composed of four proteins: P, T, L and H.

It carries out the reaction N(6)-[(R)-S(8)-aminomethyldihydrolipoyl]-L-lysyl-[protein] + (6S)-5,6,7,8-tetrahydrofolate = N(6)-[(R)-dihydrolipoyl]-L-lysyl-[protein] + (6R)-5,10-methylene-5,6,7,8-tetrahydrofolate + NH4(+). Functionally, the glycine cleavage system catalyzes the degradation of glycine. This is Aminomethyltransferase from Bordetella avium (strain 197N).